A 493-amino-acid polypeptide reads, in one-letter code: Keratin, type II cuticular Hb3 (493 aa).

The tract at residues 1–111 (MTCGFNSIGC…PNAQCVKQEE (111 aa)) is head. The IF rod domain occupies 111-422 (EKEQIKSLNS…RLLEGEEQRL (312 aa)). Positions 112-146 (KEQIKSLNSRFAAFIDKVRFLEQQNKLLETKLQFY) are coil 1A. The interval 147 to 156 (QNRECCQSNL) is linker 1. The tract at residues 157-257 (EPLFAGYIET…YEEEIRILQS (101 aa)) is coil 1B. K217 is covalently cross-linked (Glycyl lysine isopeptide (Lys-Gly) (interchain with G-Cter in SUMO1)). A linker 12 region spans residues 258-274 (HISDTSVVVKLDNSRDL). The coil 2 stretch occupies residues 275–418 (NMDCIVAEIK…ATYRRLLEGE (144 aa)). The interval 419–493 (EQRLCEGVEA…GGGSCGQGRH (75 aa)) is tail.

The protein belongs to the intermediate filament family. In terms of assembly, heterotetramer of two type I and two type II keratins. Synthesis begins in the cortex 10-15 cell layers above the apex of the dermal papilla and ends abruptly in the middle of the cortex.

The polypeptide is Keratin, type II cuticular Hb3 (KRT83) (Homo sapiens (Human)).